Consider the following 942-residue polypeptide: MTQLASSYDPKSFETDLYEAWEKAGHFKPSGTGEPYTILLPPPNVTGTLHMGHAFQQTLMDALVRYHRMRGYDTLWQVGTDHAGIATEMVVSRNLALEGKGETRDSLGREGFIGKVWEWKQQSGDIIERQMRRLGTSADWSRSTFTMDPQPSAAVNEAFVRWYEQGLIYRGQRLVNWDPVLKTAISDLEVESAEEDGFLWSIAYTLDDGLSYEHVERDADGVETLRETRDYLVVATTRPETLLGDTAVMVHPEDARYAHLIGKSVVLPLTGRRVPVIADDYVDRAFGTGVVKVTPAHDFNDYEVGVRHSLPMINLFTPVAALNENAPERFQGLDRYAARKAVLAELEDLGILVETKAHKLQVPRGDRTGQVIEPYLTDQWFVKMDDLAKRGLELVEDGSISFVPPNWINTYRHWMNNIQDWCISRQLWWGHRIPAWFDEATGSCYVGRSEEEVRAKHSLGSDVVLNQESDVLETWFSSQLWPFSTLGWPNEQAMAERGFDRYLPSSVLITGFDIIFFWVARMIMATDNLVGKIPFKDVYFTGLIRDGQGQKMSKSKGNVLDPLDIIDGISIDDLVAKRTGGLMQPKMVEKIEKATRKEFPDGIAAHGADALRFTIAALATHGRDIKFDMNRAEGYKNFCNKLWNASRFTLMNTEGAAFTGMPTPRTDAERWILSRLAAVSSEAQGHYANYRFDLLAQCLYEFAWNEFCDWFLELSKPALNGADAADAESTRHTLLYVLEALLRLLHPLTPFITEQLWQQLAPRLGLAETTLSLRPYPTAAEFEGDFAQAEADVEWLKAVISAVRRVRSELNVAPSKQVPLRLQAGLEQDRVRIERFSASLSFLLKLDSIQWLAEGESAPPAAAAIVGELKLLVPLEGLVDLDAERVRLDKEIARVEVEKEKSETKLAKFTDKVPPAVVEQERVRLVDWNTQLAGLREQRAKL.

The short motif at 43–53 is the 'HIGH' region element; sequence PNVTGTLHMGH. The short motif at 551–555 is the 'KMSKS' region element; that stretch reads KMSKS. Lysine 554 provides a ligand contact to ATP. A coiled-coil region spans residues 876 to 942; the sequence is EGLVDLDAER…AGLREQRAKL (67 aa).

It belongs to the class-I aminoacyl-tRNA synthetase family. ValS type 1 subfamily. As to quaternary structure, monomer.

The protein localises to the cytoplasm. It carries out the reaction tRNA(Val) + L-valine + ATP = L-valyl-tRNA(Val) + AMP + diphosphate. Catalyzes the attachment of valine to tRNA(Val). As ValRS can inadvertently accommodate and process structurally similar amino acids such as threonine, to avoid such errors, it has a 'posttransfer' editing activity that hydrolyzes mischarged Thr-tRNA(Val) in a tRNA-dependent manner. The chain is Valine--tRNA ligase from Stenotrophomonas maltophilia (strain R551-3).